Here is a 231-residue protein sequence, read N- to C-terminus: ATP phosphoribosyltransferase (231 aa).

It belongs to the ATP phosphoribosyltransferase family. Short subfamily. In terms of assembly, heteromultimer composed of HisG and HisZ subunits.

Its subcellular location is the cytoplasm. It carries out the reaction 1-(5-phospho-beta-D-ribosyl)-ATP + diphosphate = 5-phospho-alpha-D-ribose 1-diphosphate + ATP. Its pathway is amino-acid biosynthesis; L-histidine biosynthesis; L-histidine from 5-phospho-alpha-D-ribose 1-diphosphate: step 1/9. Catalyzes the condensation of ATP and 5-phosphoribose 1-diphosphate to form N'-(5'-phosphoribosyl)-ATP (PR-ATP). Has a crucial role in the pathway because the rate of histidine biosynthesis seems to be controlled primarily by regulation of HisG enzymatic activity. In Brucella melitensis biotype 2 (strain ATCC 23457), this protein is ATP phosphoribosyltransferase.